The primary structure comprises 490 residues: Tektin-3 (490 aa).

Residues T7, T9, and T11 are each glycosylated (O-linked (GalNAc...) threonine). N-linked (GlcNAc...) asparagine glycans are attached at residues N41, N86, N111, and N276. A coiled-coil region spans residues 415–461; that stretch reads MAQLRLVNEVYEVDETIQTLQQRLRDSEDTLQSLAHTKATLEHDLAV.

This sequence belongs to the tektin family. As to quaternary structure, microtubule inner protein component of sperm flagellar doublet microtubules. Interacts with TEKT1, TEKT2, TEKT4 and TEKT5. Interacts with CCDC38. Post-translationally, N- and O-glycosylated. Ubiquitinated, leading to its degradation. Deubiquitinated by USP16, promoting its stability. In terms of processing, may be proteolytically processed during the epididymal transit of spermatozoa. As to expression, expressed preferentially in testis. Expressed predominantly in late pachytene spermatocytes and early round spermatids. Expressed in spermatozoa.

It is found in the cytoplasm. The protein resides in the cytoskeleton. It localises to the cilium axoneme. The protein localises to the flagellum axoneme. Its subcellular location is the cytoplasmic vesicle. It is found in the secretory vesicle. The protein resides in the acrosome outer membrane. In terms of biological role, microtubule inner protein (MIP) part of the dynein-decorated doublet microtubules (DMTs) in cilia and flagellar axoneme. Forms filamentous polymers in the walls of ciliary and flagellar microtubules. Required for normal sperm mobility. In Mus musculus (Mouse), this protein is Tektin-3 (Tekt3).